We begin with the raw amino-acid sequence, 320 residues long: MLAKSPLKIVLCSPRGFCAGVVRAIDTVERALALYGAPVYVRHEIVHNKYVVDSLRAKGAIFVEELEEIPDTKAPVVFSAHGVPKSVPEHALSRNFFSIDATCPLVTKVHREAAIHFKRGREILLIGHSHHPEVVGTLGQLPAGAVTLIETAADAEAYQPKDPNNLAFVTQTTLSIDDTAGIVTVLRERFPNISGPHKEDICYATTNRQAAVKKVAPVVDAMIVVGAPNSSNSQRLREVAEREGCKVAVLVQRASDLDWSQFEGIKVLGLTAGASAPEVIVEEIMGAFAERFDLSVETVSAAEENEFFPVPRVLRPDAAE.

Cysteine 18 lines the [4Fe-4S] cluster pocket. (2E)-4-hydroxy-3-methylbut-2-enyl diphosphate-binding residues include histidine 47 and histidine 81. The dimethylallyl diphosphate site is built by histidine 47 and histidine 81. Residues histidine 47 and histidine 81 each contribute to the isopentenyl diphosphate site. Position 103 (cysteine 103) interacts with [4Fe-4S] cluster. Histidine 131 is a (2E)-4-hydroxy-3-methylbut-2-enyl diphosphate binding site. Histidine 131 is a dimethylallyl diphosphate binding site. Histidine 131 is a binding site for isopentenyl diphosphate. Glutamate 133 (proton donor) is an active-site residue. Threonine 172 serves as a coordination point for (2E)-4-hydroxy-3-methylbut-2-enyl diphosphate. A [4Fe-4S] cluster-binding site is contributed by cysteine 202. (2E)-4-hydroxy-3-methylbut-2-enyl diphosphate is bound by residues serine 230, serine 231, asparagine 232, and serine 275. Residues serine 230, serine 231, asparagine 232, and serine 275 each coordinate dimethylallyl diphosphate. Isopentenyl diphosphate-binding residues include serine 230, serine 231, asparagine 232, and serine 275.

Belongs to the IspH family. Requires [4Fe-4S] cluster as cofactor.

The catalysed reaction is isopentenyl diphosphate + 2 oxidized [2Fe-2S]-[ferredoxin] + H2O = (2E)-4-hydroxy-3-methylbut-2-enyl diphosphate + 2 reduced [2Fe-2S]-[ferredoxin] + 2 H(+). It carries out the reaction dimethylallyl diphosphate + 2 oxidized [2Fe-2S]-[ferredoxin] + H2O = (2E)-4-hydroxy-3-methylbut-2-enyl diphosphate + 2 reduced [2Fe-2S]-[ferredoxin] + 2 H(+). It participates in isoprenoid biosynthesis; dimethylallyl diphosphate biosynthesis; dimethylallyl diphosphate from (2E)-4-hydroxy-3-methylbutenyl diphosphate: step 1/1. It functions in the pathway isoprenoid biosynthesis; isopentenyl diphosphate biosynthesis via DXP pathway; isopentenyl diphosphate from 1-deoxy-D-xylulose 5-phosphate: step 6/6. Its function is as follows. Catalyzes the conversion of 1-hydroxy-2-methyl-2-(E)-butenyl 4-diphosphate (HMBPP) into a mixture of isopentenyl diphosphate (IPP) and dimethylallyl diphosphate (DMAPP). Acts in the terminal step of the DOXP/MEP pathway for isoprenoid precursor biosynthesis. The polypeptide is 4-hydroxy-3-methylbut-2-enyl diphosphate reductase 2 (Rhodopseudomonas palustris (strain ATCC BAA-98 / CGA009)).